A 158-amino-acid chain; its full sequence is MAAGAAGSITTLPALPDDGGGGAFPPGHFKDPKRLYCKNGGFFLRINPDGRVDGVREKSDPHIKLQLQAEERGVVSIKGVSANRFLAMKEDGRLLALKCATEECFFFERLESNNYNTYRSRKYSDWYVALKRTGQYKPGPKTGPGQKAILFLPMSAKS.

The propeptide occupies 1 to 12 (MAAGAAGSITTL). Asn-39 lines the heparin pocket. The interval 131–147 (KRTGQYKPGPKTGPGQK) is heparin-binding.

This sequence belongs to the heparin-binding growth factors family.

Its subcellular location is the secreted. The protein resides in the nucleus. In terms of biological role, acts as a ligand for FGFR1, FGFR2, FGFR3 and FGFR4. Also acts as an integrin ligand which is required for FGF2 signaling. Plays an important role in the regulation of cell survival, cell division, cell differentiation and cell migration. Functions as a potent mitogen in vitro. Can induce angiogenesis. The protein is Fibroblast growth factor 2 (FGF2) of Gallus gallus (Chicken).